The sequence spans 103 residues: Large ribosomal subunit protein bL21 (103 aa).

This sequence belongs to the bacterial ribosomal protein bL21 family. As to quaternary structure, part of the 50S ribosomal subunit. Contacts protein L20.

Functionally, this protein binds to 23S rRNA in the presence of protein L20. The protein is Large ribosomal subunit protein bL21 of Azotobacter vinelandii (strain DJ / ATCC BAA-1303).